The following is a 140-amino-acid chain: uncharacterized protein (140 aa).

A run of 2 helical transmembrane segments spans residues L33 to F53 and S59 to F79. Basic and acidic residues predominate over residues E89–D104. Residues E89–S140 are disordered. Polar residues predominate over residues F105–A121.

The protein localises to the membrane. This is an uncharacterized protein from Schizosaccharomyces pombe (strain 972 / ATCC 24843) (Fission yeast).